The chain runs to 1054 residues: Trehalose synthase complex regulatory subunit TPS3 (1054 aa).

Residues 112–133 (AANSGIPPANNPVSSGSTAQRP) form a disordered region. Residues 122–132 (NPVSSGSTAQR) are compositionally biased toward polar residues. Residues S148, S150, and S181 each carry the phosphoserine modification. 2 disordered regions span residues 155–203 (ASSI…PVSK) and 223–250 (QQQA…SSSN). Residues 170 to 182 (LSSSLMKNPNLSF) are compositionally biased toward polar residues. Positions 235–249 (SGSTAGDSSIASSSS) are enriched in low complexity. T265 carries the phosphothreonine modification. S267 and S273 each carry phosphoserine. Residues 287-778 (KFGGYSNNAK…SNQETSTVFN (492 aa)) are glycosyltransferase. Position 960 is a phosphoserine (S960).

It in the N-terminal section; belongs to the glycosyltransferase 20 family. As to quaternary structure, the trehalose synthase complex is composed of the two catalytic subunits TPS1 and TPS2 and at least one of the two regulatory subunits TPS3 or TSL1.

It localises to the cytoplasm. In terms of biological role, regulatory subunit of the trehalose synthase complex that catalyzes the production of trehalose from glucose-6-phosphate and UDP-glucose in a two step process. May stabilize the trehalose synthase complex. This Saccharomyces cerevisiae (strain ATCC 204508 / S288c) (Baker's yeast) protein is Trehalose synthase complex regulatory subunit TPS3 (TPS3).